An 868-amino-acid chain; its full sequence is MNATKELTFNLLNKFQDKERFGSAQRHAGISLKGFISGILFSFLYFLFQLSLFIILRSRFKTIYQANVVLKIHPGSKVCFAKKKIKNYWSLFAFLKQLPGRMLDPMEKFERNERYGLDNYLFLRFLKLLIFFFAVLSIINIPILIPIHYFSRDILKENEGERYEQSFRTTSKLDKWTMSNLSPNSSNTLICHLFLSIFVVLWFHFILSSELRFVNRLGYSVLTKSKYQNILYLEGFSSKLVTQSISLETFFQPLHSDCFGVTHFIPKNLKKVHKLEIKLNKLQKSKEQIIFEIILEKYFRRVSIHRHLIANHKRFFFSKLKNHLLFQYKKLVFLTQFRISYYCTKIRLRWKKSSIFPLYYPKLYVNTETILERKYRILDKIIRKEKLIKFQVNSLKATSETKQALPDDLSSGTDIYMDKMFITFKSTLLSNVIGELLSYRLPTQNLKVIIGPNVNDIIWRNILDSSPLWKSAKYFSANILRIFVIIGWILPVAFLGLISQIPNISSLIPFTKIIHFQSPFIREVAKNLIPIVTLIIIIEIVPYFFRWLSYLRGLKTGAQIEADVQNWYFVFVFIHLFVVVTISSGFSIIIERLLNNPVSIPALLANDLPKCANFFCSFVLIRGMAYAGGNLLRIKELLFELFYYKWKRSTPHAQFKRLKTSLFFQLGSIYPIFSVLGCIGIIYSVVAPIILLLCCISFSMVFFSFSYLFKYQYNKENYSETFGKLYIQALMQLYAGIYFMEFCLLGLFTLFDQYTLSTIMLVVFALTVITHSKISKQIKSKPQRIPTLEYLSNLTEERKDQFCQESYTFHDIFSICRNSDEIWLPRDKLGISEEEQSFLEKSYHLKFDLNMYSMNLFGDCHLENSHLH.

The Extracellular segment spans residues 1 to 34; that stretch reads MNATKELTFNLLNKFQDKERFGSAQRHAGISLKG. The N-linked (GlcNAc...) asparagine glycan is linked to Asn2. Residues 35-55 traverse the membrane as a helical segment; that stretch reads FISGILFSFLYFLFQLSLFII. The Cytoplasmic portion of the chain corresponds to 56–127; sequence LRSRFKTIYQ…DNYLFLRFLK (72 aa). The chain crosses the membrane as a helical span at residues 128 to 148; sequence LLIFFFAVLSIINIPILIPIH. The Extracellular portion of the chain corresponds to 149-187; sequence YFSRDILKENEGERYEQSFRTTSKLDKWTMSNLSPNSSN. Asn184 carries an N-linked (GlcNAc...) asparagine glycan. The chain crosses the membrane as a helical span at residues 188–208; the sequence is TLICHLFLSIFVVLWFHFILS. Topologically, residues 209–481 are cytoplasmic; the sequence is SELRFVNRLG…AKYFSANILR (273 aa). The chain crosses the membrane as a helical span at residues 482–502; it reads IFVIIGWILPVAFLGLISQIP. Asn503 carries an N-linked (GlcNAc...) asparagine glycan. The Extracellular portion of the chain corresponds to 503-527; it reads NISSLIPFTKIIHFQSPFIREVAKN. The chain crosses the membrane as a helical span at residues 528–548; that stretch reads LIPIVTLIIIIEIVPYFFRWL. The Cytoplasmic segment spans residues 549–569; the sequence is SYLRGLKTGAQIEADVQNWYF. The helical transmembrane segment at 570 to 590 threads the bilayer; the sequence is VFVFIHLFVVVTISSGFSIII. Residues 591–611 lie on the Extracellular side of the membrane; it reads ERLLNNPVSIPALLANDLPKC. A helical transmembrane segment spans residues 612–632; it reads ANFFCSFVLIRGMAYAGGNLL. The Cytoplasmic portion of the chain corresponds to 633–660; the sequence is RIKELLFELFYYKWKRSTPHAQFKRLKT. Residues 661–683 traverse the membrane as a helical segment; it reads SLFFQLGSIYPIFSVLGCIGIIY. At 684–692 the chain is on the extracellular side; it reads SVVAPIILL. Residues 693-713 form a helical membrane-spanning segment; sequence LCCISFSMVFFSFSYLFKYQY. Residues 714-730 lie on the Cytoplasmic side of the membrane; sequence NKENYSETFGKLYIQAL. A helical membrane pass occupies residues 731–751; that stretch reads MQLYAGIYFMEFCLLGLFTLF. At 752–753 the chain is on the extracellular side; sequence DQ. Residues 754-774 traverse the membrane as a helical segment; that stretch reads YTLSTIMLVVFALTVITHSKI. Over 775–868 the chain is Cytoplasmic; it reads SKQIKSKPQR…DCHLENSHLH (94 aa).

Belongs to the CSC1 (TC 1.A.17) family.

It is found in the membrane. Its function is as follows. Acts as an osmosensitive calcium-permeable cation channel. Required for spore wall assembly and ascus formation. The chain is Sporulation-specific protein 75 (SPO75) from Saccharomyces cerevisiae (strain ATCC 204508 / S288c) (Baker's yeast).